The chain runs to 227 residues: MVEVKKHKFPGVYVVIDDDGSEKIATKNLVPGQRVYGERVIKWEGEEYRIWNPHRSKLGAAIVNGLKNFPIKPGKSVLYLGIASGTTASHVSDIVGWEGKIYGIEFSPRVLRELVPIVEERRNIIPILGDATKPEEYRALVTKVDVIFEDVAQPTQAKILIDNAKAYLKRGGYGMIAVKSRSIDVTKEPEQVFKEVERELSEYFEVIERLNLEPYEKDHALFVVRKP.

S-adenosyl-L-methionine is bound by residues 86 to 87 (TT), 105 to 106 (EF), 130 to 131 (DA), and 150 to 153 (DVAQ).

The protein belongs to the methyltransferase superfamily. Fibrillarin family. Interacts with nop5. Component of box C/D small ribonucleoprotein (sRNP) particles that contain rpl7ae, FlpA and nop5, plus a guide RNA. These sRNP particles form homodimers, giving rise to an asymmetric holoenzyme.

Functionally, involved in pre-rRNA and tRNA processing. Utilizes the methyl donor S-adenosyl-L-methionine to catalyze the site-specific 2'-hydroxyl methylation of ribose moieties in rRNA and tRNA. Site specificity is provided by a guide RNA that base pairs with the substrate. Methylation occurs at a characteristic distance from the sequence involved in base pairing with the guide RNA. This Pyrococcus furiosus (strain ATCC 43587 / DSM 3638 / JCM 8422 / Vc1) protein is Fibrillarin-like rRNA/tRNA 2'-O-methyltransferase.